The following is a 188-amino-acid chain: Peptidyl-tRNA hydrolase (188 aa).

Tyrosine 15 contacts tRNA. Histidine 20 functions as the Proton acceptor in the catalytic mechanism. TRNA is bound by residues phenylalanine 66, asparagine 68, and asparagine 114.

This sequence belongs to the PTH family. As to quaternary structure, monomer.

It localises to the cytoplasm. It catalyses the reaction an N-acyl-L-alpha-aminoacyl-tRNA + H2O = an N-acyl-L-amino acid + a tRNA + H(+). Hydrolyzes ribosome-free peptidyl-tRNAs (with 1 or more amino acids incorporated), which drop off the ribosome during protein synthesis, or as a result of ribosome stalling. Functionally, catalyzes the release of premature peptidyl moieties from peptidyl-tRNA molecules trapped in stalled 50S ribosomal subunits, and thus maintains levels of free tRNAs and 50S ribosomes. This chain is Peptidyl-tRNA hydrolase, found in Lactococcus lactis subsp. lactis (strain IL1403) (Streptococcus lactis).